Reading from the N-terminus, the 132-residue chain is NADH-quinone oxidoreductase subunit A (132 aa).

Transmembrane regions (helical) follow at residues 7 to 27 (YWVL…MIGV), 62 to 82 (FYLI…LYAW), and 91 to 111 (WTGY…LAYL).

It belongs to the complex I subunit 3 family. In terms of assembly, NDH-1 is composed of 14 different subunits. Subunits NuoA, H, J, K, L, M, N constitute the membrane sector of the complex.

Its subcellular location is the cell inner membrane. The catalysed reaction is a quinone + NADH + 5 H(+)(in) = a quinol + NAD(+) + 4 H(+)(out). Functionally, NDH-1 shuttles electrons from NADH, via FMN and iron-sulfur (Fe-S) centers, to quinones in the respiratory chain. The immediate electron acceptor for the enzyme in this species is believed to be ubiquinone. Couples the redox reaction to proton translocation (for every two electrons transferred, four hydrogen ions are translocated across the cytoplasmic membrane), and thus conserves the redox energy in a proton gradient. This is NADH-quinone oxidoreductase subunit A from Acidiphilium cryptum (strain JF-5).